The chain runs to 842 residues: Envelope glycoprotein gp160 (842 aa).

The N-terminal stretch at 1–23 (MGMKSGWLLFYLLVSLIKVIGSE) is a signal peptide. The Extracellular segment spans residues 24–663 (QHWVTVYYGV…ITKWLWYIKI (640 aa)). The cysteines at positions 45 and 65 are disulfide-linked. N-linked (GlcNAc...) asparagine; by host glycans are attached at residues N79, N123, N131, N134, N149, N153, N181, N190, N225, N229, N234, N255, N267, N278, N284, N290, N320, N331, and N345. 5 disulfides stabilise this stretch: C110–C198, C117–C189, C122–C150, C211–C240, and C221–C232. Positions 122 to 149 (CNDSYGEERNNTNMTTREPDIGYKQMKN) are V1. The V2 stretch occupies residues 150–189 (CSFNATTELTDKKKQVYSLFYVEDVVPINAYNKTYRLINC). Residues 285–318 (CTRPGNNTGGQVQIGPAMTFYNIEKIVGDIRQAY) form a V3 region. C285 and C319 are disulfide-bonded. The CD4-binding loop stretch occupies residues 353-363 (RNEGDLEVTHL). 2 cysteine pairs are disulfide-bonded: C367–C423 and C374–C396. A V4 region spans residues 374–396 (CNTSKLFNEELLNETGEPITLPC). N-linked (GlcNAc...) asparagine; by host glycosylation is found at N375, N386, N422, and N426. V5 regions lie at residues 439 to 448 (DTKETIVYPS) and 441 to 448 (KETIVYPS). Residues 489 to 510 (AAFGLGALFLGFLGAAGSTMGA) are fusion peptide. The immunosuppression stretch occupies residues 552–570 (KQLQAKVLAIERYLRDQQI). Cysteines 576 and 582 form a disulfide. N-linked (GlcNAc...) asparagine; by host glycosylation is found at N589, N594, N595, N604, and N616. A coiled-coil region spans residues 612–646 (EKVRNYSGVIFGLIEQAQEQQNTNEKSLLELDQWD). The tract at residues 641–662 (ELDQWDSLWSWFGITKWLWYIK) is MPER; binding to GalCer. A helical membrane pass occupies residues 664 to 684 (AIMIVAGIVGIRIISIVITII). Topologically, residues 685–842 (ARVRQGYSPL…IRQGLERALI (158 aa)) are cytoplasmic. A YXXL motif; contains endocytosis signal motif is present at residues 691–694 (YSPL).

This sequence belongs to the HIV-1 env protein family. In terms of assembly, the mature envelope protein (Env) consists of a homotrimer of non-covalently associated gp120-gp41 heterodimers. The resulting complex protrudes from the virus surface as a spike. There seems to be as few as 10 spikes on the average virion. Interacts with host CD4, CCR5 and CXCR4. Gp120 also interacts with the C-type lectins CD209/DC-SIGN and CLEC4M/DC-SIGNR (collectively referred to as DC-SIGN(R)). Gp120 and gp41 interact with GalCer. Gp120 interacts with host ITGA4/ITGB7 complex; on CD4+ T-cells, this interaction results in rapid activation of integrin ITGAL/LFA-1, which facilitates efficient cell-to-cell spreading of HIV-1. Gp120 interacts with cell-associated heparan sulfate; this interaction increases virus infectivity on permissive cells and may be involved in infection of CD4- cells. The mature envelope protein (Env) consists of a homotrimer of non-covalently associated gp120-gp41 heterodimers. The resulting complex protrudes from the virus surface as a spike. There seems to be as few as 10 spikes on the average virion. Post-translationally, highly glycosylated by host. The high number of glycan on the protein is reffered to as 'glycan shield' because it contributes to hide protein sequence from adaptive immune system. In terms of processing, palmitoylation of the transmembrane protein and of Env polyprotein (prior to its proteolytic cleavage) is essential for their association with host cell membrane lipid rafts. Palmitoylation is therefore required for envelope trafficking to classical lipid rafts, but not for viral replication. Specific enzymatic cleavages in vivo yield mature proteins. Envelope glycoproteins are synthesized as an inactive precursor that is heavily N-glycosylated and processed likely by host cell furin in the Golgi to yield the mature SU and TM proteins. The cleavage site between SU and TM requires the minimal sequence [KR]-X-[KR]-R. About 2 of the 9 disulfide bonds of gp41 are reduced by P4HB/PDI, following binding to CD4 receptor.

It localises to the virion membrane. The protein localises to the host cell membrane. Its subcellular location is the host endosome membrane. Its function is as follows. Oligomerizes in the host endoplasmic reticulum into predominantly trimers. In a second time, gp160 transits in the host Golgi, where glycosylation is completed. The precursor is then proteolytically cleaved in the trans-Golgi and thereby activated by cellular furin or furin-like proteases to produce gp120 and gp41. Attaches the virus to the host lymphoid cell by binding to the primary receptor CD4. This interaction induces a structural rearrangement creating a high affinity binding site for a chemokine coreceptor like CXCR4 and/or CCR5. Acts as a ligand for CD209/DC-SIGN and CLEC4M/DC-SIGNR, which are respectively found on dendritic cells (DCs), and on endothelial cells of liver sinusoids and lymph node sinuses. These interactions allow capture of viral particles at mucosal surfaces by these cells and subsequent transmission to permissive cells. HIV subverts the migration properties of dendritic cells to gain access to CD4+ T-cells in lymph nodes. Virus transmission to permissive T-cells occurs either in trans (without DCs infection, through viral capture and transmission), or in cis (following DCs productive infection, through the usual CD4-gp120 interaction), thereby inducing a robust infection. In trans infection, bound virions remain infectious over days and it is proposed that they are not degraded, but protected in non-lysosomal acidic organelles within the DCs close to the cell membrane thus contributing to the viral infectious potential during DCs' migration from the periphery to the lymphoid tissues. On arrival at lymphoid tissues, intact virions recycle back to DCs' cell surface allowing virus transmission to CD4+ T-cells. In terms of biological role, acts as a class I viral fusion protein. Under the current model, the protein has at least 3 conformational states: pre-fusion native state, pre-hairpin intermediate state, and post-fusion hairpin state. During fusion of viral and target intracellular membranes, the coiled coil regions (heptad repeats) assume a trimer-of-hairpins structure, positioning the fusion peptide in close proximity to the C-terminal region of the ectodomain. The formation of this structure appears to drive apposition and subsequent fusion of viral and target cell membranes. Complete fusion occurs in host cell endosomes and is dynamin-dependent, however some lipid transfer might occur at the plasma membrane. The virus undergoes clathrin-dependent internalization long before endosomal fusion, thus minimizing the surface exposure of conserved viral epitopes during fusion and reducing the efficacy of inhibitors targeting these epitopes. Membranes fusion leads to delivery of the nucleocapsid into the cytoplasm. This chain is Envelope glycoprotein gp160, found in Human immunodeficiency virus type 1 group N (isolate YBF30) (HIV-1).